The chain runs to 232 residues: 2-C-methyl-D-erythritol 4-phosphate cytidylyltransferase (232 aa).

The protein belongs to the IspD/TarI cytidylyltransferase family. IspD subfamily.

It carries out the reaction 2-C-methyl-D-erythritol 4-phosphate + CTP + H(+) = 4-CDP-2-C-methyl-D-erythritol + diphosphate. Its pathway is isoprenoid biosynthesis; isopentenyl diphosphate biosynthesis via DXP pathway; isopentenyl diphosphate from 1-deoxy-D-xylulose 5-phosphate: step 2/6. Catalyzes the formation of 4-diphosphocytidyl-2-C-methyl-D-erythritol from CTP and 2-C-methyl-D-erythritol 4-phosphate (MEP). The protein is 2-C-methyl-D-erythritol 4-phosphate cytidylyltransferase of Stenotrophomonas maltophilia (strain K279a).